Here is a 318-residue protein sequence, read N- to C-terminus: Holliday junction branch migration complex subunit RuvB (318 aa).

A large ATPase domain (RuvB-L) region spans residues 1–168 (MPENLEIRPS…FGYVAKIVDY (168 aa)). Residues I7, R8, G49, K52, T53, T54, R158, Y168, and R205 each coordinate ATP. T53 contributes to the Mg(2+) binding site. The segment at 169-239 (TLEDMIQIIR…IVNKTFDSIG (71 aa)) is small ATPAse domain (RuvB-S). A head domain (RuvB-H) region spans residues 242–318 (NQGLSQINIE…RDYLLELKTN (77 aa)). Residues R278, K297, and R302 each coordinate DNA.

Belongs to the RuvB family. In terms of assembly, homohexamer. Forms an RuvA(8)-RuvB(12)-Holliday junction (HJ) complex. HJ DNA is sandwiched between 2 RuvA tetramers; dsDNA enters through RuvA and exits via RuvB. An RuvB hexamer assembles on each DNA strand where it exits the tetramer. Each RuvB hexamer is contacted by two RuvA subunits (via domain III) on 2 adjacent RuvB subunits; this complex drives branch migration. In the full resolvosome a probable DNA-RuvA(4)-RuvB(12)-RuvC(2) complex forms which resolves the HJ.

It localises to the cytoplasm. The enzyme catalyses ATP + H2O = ADP + phosphate + H(+). Its function is as follows. The RuvA-RuvB-RuvC complex processes Holliday junction (HJ) DNA during genetic recombination and DNA repair, while the RuvA-RuvB complex plays an important role in the rescue of blocked DNA replication forks via replication fork reversal (RFR). RuvA specifically binds to HJ cruciform DNA, conferring on it an open structure. The RuvB hexamer acts as an ATP-dependent pump, pulling dsDNA into and through the RuvAB complex. RuvB forms 2 homohexamers on either side of HJ DNA bound by 1 or 2 RuvA tetramers; 4 subunits per hexamer contact DNA at a time. Coordinated motions by a converter formed by DNA-disengaged RuvB subunits stimulates ATP hydrolysis and nucleotide exchange. Immobilization of the converter enables RuvB to convert the ATP-contained energy into a lever motion, pulling 2 nucleotides of DNA out of the RuvA tetramer per ATP hydrolyzed, thus driving DNA branch migration. The RuvB motors rotate together with the DNA substrate, which together with the progressing nucleotide cycle form the mechanistic basis for DNA recombination by continuous HJ branch migration. Branch migration allows RuvC to scan DNA until it finds its consensus sequence, where it cleaves and resolves cruciform DNA. The polypeptide is Holliday junction branch migration complex subunit RuvB (Mesomycoplasma hyopneumoniae (strain 232) (Mycoplasma hyopneumoniae)).